The following is a 572-amino-acid chain: Glypican-5 (572 aa).

A signal peptide spans 1–24 (MDAQTWPVGFRCLLLLALVGSARS). Asn120 and Asn237 each carry an N-linked (GlcNAc...) asparagine glycan. The segment at 355-375 (SPRCSFDQSKEKHGMKTTTRN) is disordered. O-linked (Xyl...) (glycosaminoglycan) serine glycans are attached at residues Ser441, Ser486, Ser495, Ser507, and Ser509. An N-linked (GlcNAc...) asparagine glycan is attached at Asn527.

It belongs to the glypican family. In adult, primarily expressed in the brain. Also detected in fetal brain, lung and liver.

Its subcellular location is the cell membrane. The protein localises to the secreted. It is found in the extracellular space. Functionally, cell surface proteoglycan that bears heparan sulfate. This is Glypican-5 (GPC5) from Homo sapiens (Human).